Reading from the N-terminus, the 309-residue chain is Protease HtpX homolog (309 aa).

2 helical membrane-spanning segments follow: residues 7-27 (AILLAGLTALFMGVGYLIGGA) and 28-48 (SGAMIALVVAAATNIFAYWNS). His130 lines the Zn(2+) pocket. Glu131 is an active-site residue. Residue His134 participates in Zn(2+) binding. 2 helical membrane passes run 145-165 (VTATIAGAVSMLAQFGMFFGG) and 173-193 (GLGVIGSIAMMILAPIAAMLV). Glu202 is a binding site for Zn(2+).

The protein belongs to the peptidase M48B family. Zn(2+) is required as a cofactor.

The protein localises to the cell inner membrane. This Rhodopseudomonas palustris (strain BisA53) protein is Protease HtpX homolog.